The following is a 325-amino-acid chain: Basic membrane protein A (325 aa).

The first 3 residues, 1-3, serve as a signal peptide directing secretion; that stretch reads FLS. Residue Cys4 is the site of N-palmitoyl cysteine attachment. A lipid anchor (S-diacylglycerol cysteine) is attached at Cys4.

This sequence belongs to the BMP lipoprotein family. Monomer.

It localises to the cell inner membrane. Immunogenic protein. May be part of an ABC-type nucleoside uptake system involved in the purine salvage pathway. The sequence is that of Basic membrane protein A (bmpA) from Borreliella afzelii (Borrelia afzelii).